A 498-amino-acid polypeptide reads, in one-letter code: Tryptophan decarboxylase TDC2 (498 aa).

Lys316 bears the N6-(pyridoxal phosphate)lysine mark.

Belongs to the group II decarboxylase family. Pyridoxal 5'-phosphate serves as cofactor.

The enzyme catalyses L-tryptophan + H(+) = tryptamine + CO2. Involved in the biosynthesis of tryptamine. Supplies tryptamine for the indole moiety of camptothecin (CPT), an anti-cancer monoterpene alkaloid. Represents a key step in monoterpene indole alkaloid biosynthesis. Is specific for tryptophan, and inactive against tyrosine, phenylalanine and 3,4-dihydroxyphenylalanine (dopa). The sequence is that of Tryptophan decarboxylase TDC2 from Camptotheca acuminata (Happy tree).